We begin with the raw amino-acid sequence, 245 residues long: Orotidine 5'-phosphate decarboxylase (245 aa).

Substrate is bound by residues aspartate 22, lysine 44, 71–80 (DLKFHDIPNT), threonine 131, arginine 192, glutamine 201, glycine 221, and arginine 222. Lysine 73 acts as the Proton donor in catalysis.

It belongs to the OMP decarboxylase family. Type 1 subfamily. Homodimer.

The catalysed reaction is orotidine 5'-phosphate + H(+) = UMP + CO2. It participates in pyrimidine metabolism; UMP biosynthesis via de novo pathway; UMP from orotate: step 2/2. Its function is as follows. Catalyzes the decarboxylation of orotidine 5'-monophosphate (OMP) to uridine 5'-monophosphate (UMP). This Yersinia pestis bv. Antiqua (strain Antiqua) protein is Orotidine 5'-phosphate decarboxylase.